The primary structure comprises 431 residues: Phosphoribosylamine--glycine ligase (431 aa).

The ATP-grasp domain maps to 109 to 316; that stretch reads KDFLARHGIP…LVDLVEAAID (208 aa). 135-196 contacts ATP; that stretch reads VREKGAPIVV…EEFLDGEEAS (62 aa). Glu-286 and Asn-288 together coordinate Mg(2+).

It belongs to the GARS family. Mg(2+) is required as a cofactor. Mn(2+) serves as cofactor.

It catalyses the reaction 5-phospho-beta-D-ribosylamine + glycine + ATP = N(1)-(5-phospho-beta-D-ribosyl)glycinamide + ADP + phosphate + H(+). It functions in the pathway purine metabolism; IMP biosynthesis via de novo pathway; N(1)-(5-phospho-D-ribosyl)glycinamide from 5-phospho-alpha-D-ribose 1-diphosphate: step 2/2. The protein is Phosphoribosylamine--glycine ligase of Xanthomonas campestris pv. campestris (strain ATCC 33913 / DSM 3586 / NCPPB 528 / LMG 568 / P 25).